We begin with the raw amino-acid sequence, 112 residues long: uncharacterized protein (112 aa).

The tract at residues 91-112 (ENQRKKGTRKRRSSEVDSKEKS) is disordered. The segment covering 103–112 (SSEVDSKEKS) has biased composition (basic and acidic residues).

This is an uncharacterized protein from Caenorhabditis elegans.